The sequence spans 49 residues: Large ribosomal subunit protein bL33 (49 aa).

The protein belongs to the bacterial ribosomal protein bL33 family.

In Clostridium beijerinckii (strain ATCC 51743 / NCIMB 8052) (Clostridium acetobutylicum), this protein is Large ribosomal subunit protein bL33.